A 201-amino-acid chain; its full sequence is Protease (201 aa).

Catalysis depends on residues histidine 55, aspartate 72, and cysteine 122.

The protein belongs to the peptidase C5 family. As to quaternary structure, interacts with protease cofactor pVI-C; this interaction is necessary for protease activation.

Its subcellular location is the virion. The protein localises to the host nucleus. It carries out the reaction Cleaves proteins of the adenovirus and its host cell at two consensus sites: -Yaa-Xaa-Gly-Gly-|-Xaa- and -Yaa-Xaa-Gly-Xaa-|-Gly- (in which Yaa is Met, Ile or Leu, and Xaa is any amino acid).. With respect to regulation, requires DNA and protease cofactor for maximal activation. Inside nascent virions, becomes partially activated by binding to the viral DNA, allowing it to cleave the cofactor that binds to the protease and fully activates it. Actin, like the viral protease cofactor, seems to act as a cofactor in the cleavage of cytokeratin 18 and of actin itself. In terms of biological role, cleaves viral precursor proteins (pTP, pIIIa, pVI, pVII, pVIII, and pX) inside newly assembled particles giving rise to mature virions. Protease complexed to its cofactor slides along the viral DNA to specifically locate and cleave the viral precursors. Mature virions have a weakened organization compared to the unmature virions, thereby facilitating subsequent uncoating. Without maturation, the particle lacks infectivity and is unable to uncoat. Late in adenovirus infection, in the cytoplasm, may participate in the cytoskeleton destruction. Cleaves host cell cytoskeletal keratins K7 and K18. In Pantherophis guttatus (Corn snake), this protein is Protease.